Consider the following 783-residue polypeptide: Endonuclease MutS2 (783 aa).

ATP is bound at residue 328 to 335 (GPNTGGKT). Residues 708 to 783 (LDLRGKRYEE…GSGCTIATLG (76 aa)) enclose the Smr domain.

The protein belongs to the DNA mismatch repair MutS family. MutS2 subfamily. Homodimer. Binds to stalled ribosomes, contacting rRNA.

Endonuclease that is involved in the suppression of homologous recombination and thus may have a key role in the control of bacterial genetic diversity. Functionally, acts as a ribosome collision sensor, splitting the ribosome into its 2 subunits. Detects stalled/collided 70S ribosomes which it binds and splits by an ATP-hydrolysis driven conformational change. Acts upstream of the ribosome quality control system (RQC), a ribosome-associated complex that mediates the extraction of incompletely synthesized nascent chains from stalled ribosomes and their subsequent degradation. Probably generates substrates for RQC. The sequence is that of Endonuclease MutS2 from Streptococcus thermophilus (strain ATCC BAA-250 / LMG 18311).